A 59-amino-acid chain; its full sequence is UPF0181 protein YoaH (59 aa).

It belongs to the UPF0181 family.

The protein is UPF0181 protein YoaH of Shigella flexneri.